The primary structure comprises 172 residues: Glutamyl-tRNA(Gln) amidotransferase subunit C-3, mitochondrial (172 aa).

The segment at 49-71 is disordered; the sequence is KHPSKVPQRPNKSTIDGQSTPTR. The segment covering 58 to 71 has biased composition (polar residues); sequence PNKSTIDGQSTPTR.

The protein belongs to the GatC family. In terms of assembly, subunit of the heterotrimeric GatCAB amidotransferase (AdT) complex, composed of A, B and C subunits.

It is found in the mitochondrion. It catalyses the reaction L-glutamyl-tRNA(Gln) + L-glutamine + ATP + H2O = L-glutaminyl-tRNA(Gln) + L-glutamate + ADP + phosphate + H(+). Functionally, allows the formation of correctly charged Gln-tRNA(Gln) through the transamidation of misacylated Glu-tRNA(Gln) in the mitochondria. The reaction takes place in the presence of glutamine and ATP through an activated gamma-phospho-Glu-tRNA(Gln). This Culex quinquefasciatus (Southern house mosquito) protein is Glutamyl-tRNA(Gln) amidotransferase subunit C-3, mitochondrial.